Here is a 577-residue protein sequence, read N- to C-terminus: External alternative NAD(P)H-ubiquinone oxidoreductase B1, mitochondrial (577 aa).

The transit peptide at 1 to 35 (MRGFTYLSKVLHSHSSYSKLLVLCSVSTGGLLVYA) directs the protein to the mitochondrion. Residue 57-87 (RVVVLGTGWGGTSFLKDVDISSYDVQVVSPR) participates in FAD binding. NAD(+) is bound at residue 221-257 (LHFVIVGGGPTGVEFAAELHDYVYEDLVKIYPSVKDF). The EF-hand domain occupies 378-413 (KVMEDISTIFEAADKDDSGTLSVEEFRDVLEDIIIR). Asp-391, Asp-393, Ser-395, Thr-397, and Glu-402 together coordinate Ca(2+). The Microbody targeting signal signature appears at 568 to 577 (YIFGRDSSRI).

Belongs to the NADH dehydrogenase family. Requires FAD as cofactor.

It localises to the mitochondrion inner membrane. Its subcellular location is the peroxisome. It carries out the reaction a quinone + NADH + H(+) = a quinol + NAD(+). The enzyme catalyses a ubiquinone + NADH + H(+) = a ubiquinol + NAD(+). Activity is calcium-dependent with a more pronounced effect at higher pH. Calcium-dependent NAD(P)H dehydrogenase. Binds calcium ions. Alternative NADH-ubiquinone oxidoreductase which catalyzes the oxidation of mitochondrial NADH does not translocate protons across the inner mitochondrial membrane. The sequence is that of External alternative NAD(P)H-ubiquinone oxidoreductase B1, mitochondrial (NDB1) from Solanum tuberosum (Potato).